The sequence spans 88 residues: UPF0250 protein swp_3927 (88 aa).

It belongs to the UPF0250 family.

This Shewanella piezotolerans (strain WP3 / JCM 13877) protein is UPF0250 protein swp_3927.